Here is a 2643-residue protein sequence, read N- to C-terminus: BAH and coiled-coil domain-containing protein 1 (2643 aa).

2 disordered regions span residues 23–45 (SAAA…HFQP) and 84–106 (SAAS…RGSH). K220 carries the N6-acetyllysine modification. Composition is skewed to basic and acidic residues over residues 224–249 (KEKV…DRQK) and 683–702 (ERPD…DGEV). 5 disordered regions span residues 224–273 (KEKV…SCEG), 674–704 (PATK…EVRQ), 721–758 (GRPD…LESE), 985–1023 (RKPE…PSSA), and 1038–1299 (TLKT…KALP). Positions 985–1003 (RKPEDRHMELEEAAQEKTP) are enriched in basic and acidic residues. A compositionally biased stretch (pro residues) spans 1133 to 1149 (RPEPPRTFLPGEPPPCS). Over residues 1210–1224 (ATGQTNSTQGGMQNE) the composition is skewed to polar residues. A compositionally biased stretch (acidic residues) spans 1269–1284 (QEEETQLEESGGDSEV). Coiled-coil stretches lie at residues 1346 to 1373 (ALLS…DVLA) and 1437 to 1486 (LKAA…SSRS). Residues 1466–1484 (QRELARLQRRHDHEREESS) are compositionally biased toward basic and acidic residues. Disordered stretches follow at residues 1466 to 1520 (QREL…DSKK), 1537 to 1559 (GDEP…QSVS), 1604 to 1641 (KEAA…GREM), 1746 to 1781 (RAPG…SRDT), 1875 to 1896 (FDED…GVQL), 2055 to 2124 (SSCR…HFLG), 2322 to 2341 (CPSS…TGVP), and 2349 to 2386 (SMSS…SDDE). Positions 1487–1501 (PARRGPGRPRKRKHS) are enriched in basic residues. The segment covering 1631–1641 (PHPDGDSGREM) has biased composition (basic and acidic residues). Positions 1757–1767 (GKKKAKGKVKT) are enriched in basic residues. Over residues 1875 to 1892 (FDEDDTSFSDEEEEEEEA) the composition is skewed to acidic residues. Positions 2349-2374 (SMSSSSSGSSTSSSSGSVSTSSLCSS) are enriched in low complexity. Residues 2375 to 2386 (DNEDSSYSSDDE) show a composition bias toward acidic residues. Residues 2517 to 2637 (ETLRIGDCAV…PTTGRLVTAD (121 aa)) form the BAH domain.

The chain is BAH and coiled-coil domain-containing protein 1 (Bahcc1) from Mus musculus (Mouse).